The following is a 632-amino-acid chain: Protein NSP-INTERACTING KINASE 3 (632 aa).

The signal sequence occupies residues 1 to 25 (MEGVRFVVWRLGFLVFVWFFDISSA). Over 26 to 238 (TLSPTGVNYE…GTRTNGHHVA (213 aa)) the chain is Extracellular. Residue Asn-96 is glycosylated (N-linked (GlcNAc...) asparagine). LRR repeat units lie at residues 97 to 121 (LTYL…IGRL), 122 to 145 (EKLQ…LGEL), 147 to 168 (NLNY…SLSK), and 169 to 193 (IEGL…SART). N-linked (GlcNAc...) asparagine glycosylation is found at Asn-131, Asn-155, Asn-181, and Asn-210. Residues 239-259 (LAFAASFSAAFFVFFTSGMFL) traverse the membrane as a helical segment. Topologically, residues 260–632 (WWRYRRNKQI…VEAIELSGPR (373 aa)) are cytoplasmic. Thr-298 is modified (phosphothreonine). In terms of domain architecture, Protein kinase spans 301 to 584 (FNSKNILGRG…EGDGLAERWE (284 aa)). 307 to 315 (LGRGGYGIV) serves as a coordination point for ATP. Thr-324 is modified (phosphothreonine). Lys-329 lines the ATP pocket. 2 positions are modified to phosphoserine: Ser-382 and Ser-385. Positions 415 to 495 (YLHEQCDPKI…DVFGFGILLL (81 aa)) are interaction with geminivirus NSP protein. Asp-428 (proton acceptor) is an active-site residue. A phosphothreonine mark is found at Thr-461, Thr-462, and Thr-467. The residue at position 475 (Tyr-475) is a Phosphotyrosine. At Ser-477 the chain carries Phosphoserine. Thr-478 is modified (phosphothreonine). Ser-482 carries the post-translational modification Phosphoserine. Thr-557 carries the post-translational modification Phosphothreonine.

This sequence belongs to the protein kinase superfamily. Ser/Thr protein kinase family. As to quaternary structure, oligomer. Interacts with geminivirus nuclear shuttle protein (NSP). In terms of processing, autophosphorylated. In terms of tissue distribution, expressed in seedlings, leaves and flowers.

The protein localises to the cell membrane. It catalyses the reaction L-seryl-[protein] + ATP = O-phospho-L-seryl-[protein] + ADP + H(+). It carries out the reaction L-threonyl-[protein] + ATP = O-phospho-L-threonyl-[protein] + ADP + H(+). Inhibited by the viral nuclear shuttle protein (NSP) that binds to the region required for oligomerization. Its function is as follows. Involved in defense response to geminivirus infection. This chain is Protein NSP-INTERACTING KINASE 3 (NIK3), found in Arabidopsis thaliana (Mouse-ear cress).